The sequence spans 289 residues: uncharacterized protein (289 aa).

This is an uncharacterized protein from Acanthamoeba polyphaga mimivirus (APMV).